The sequence spans 86 residues: Large ribosomal subunit protein bL31B (86 aa).

The protein belongs to the bacterial ribosomal protein bL31 family. Type B subfamily. As to quaternary structure, part of the 50S ribosomal subunit.

The polypeptide is Large ribosomal subunit protein bL31B (Vibrio campbellii (strain ATCC BAA-1116)).